Here is a 149-residue protein sequence, read N- to C-terminus: MMVMDLSLQRRLAASVLKCGENRVWFDPAALEDIATAATKQDIRELIEQGVIKRKPVNGVSRARINKRKLQKRKGRRRGHGSRKGAKGARMPRKRMWILRIRALRKALRQMKAEGVVDRRTYRILYRKAKGGEFRSVAHLKIYVEQMKR.

The disordered stretch occupies residues 67–90 (KRKLQKRKGRRRGHGSRKGAKGAR).

The protein belongs to the eukaryotic ribosomal protein eL19 family. In terms of assembly, part of the 50S ribosomal subunit.

In terms of biological role, binds to the 23S rRNA. In Archaeoglobus fulgidus (strain ATCC 49558 / DSM 4304 / JCM 9628 / NBRC 100126 / VC-16), this protein is Large ribosomal subunit protein eL19.